Here is a 411-residue protein sequence, read N- to C-terminus: Serine hydroxymethyltransferase (411 aa).

Residues Leu119 and 123–125 (GHL) contribute to the (6S)-5,6,7,8-tetrahydrofolate site. The residue at position 228 (Lys228) is an N6-(pyridoxal phosphate)lysine. 351 to 353 (SPF) provides a ligand contact to (6S)-5,6,7,8-tetrahydrofolate.

The protein belongs to the SHMT family. Homodimer. The cofactor is pyridoxal 5'-phosphate.

It localises to the cytoplasm. The enzyme catalyses (6R)-5,10-methylene-5,6,7,8-tetrahydrofolate + glycine + H2O = (6S)-5,6,7,8-tetrahydrofolate + L-serine. The protein operates within one-carbon metabolism; tetrahydrofolate interconversion. It functions in the pathway amino-acid biosynthesis; glycine biosynthesis; glycine from L-serine: step 1/1. Its function is as follows. Catalyzes the reversible interconversion of serine and glycine with tetrahydrofolate (THF) serving as the one-carbon carrier. This reaction serves as the major source of one-carbon groups required for the biosynthesis of purines, thymidylate, methionine, and other important biomolecules. Also exhibits THF-independent aldolase activity toward beta-hydroxyamino acids, producing glycine and aldehydes, via a retro-aldol mechanism. This is Serine hydroxymethyltransferase from Clostridium botulinum (strain Alaska E43 / Type E3).